A 444-amino-acid chain; its full sequence is 3-isopropylmalate dehydratase large subunit (444 aa).

Residues cysteine 348, cysteine 408, and cysteine 411 each coordinate [4Fe-4S] cluster.

It belongs to the aconitase/IPM isomerase family. LeuC type 1 subfamily. As to quaternary structure, heterodimer of LeuC and LeuD. Requires [4Fe-4S] cluster as cofactor.

It catalyses the reaction (2R,3S)-3-isopropylmalate = (2S)-2-isopropylmalate. It participates in amino-acid biosynthesis; L-leucine biosynthesis; L-leucine from 3-methyl-2-oxobutanoate: step 2/4. Functionally, catalyzes the isomerization between 2-isopropylmalate and 3-isopropylmalate, via the formation of 2-isopropylmaleate. This Buchnera aphidicola subsp. Uroleucon ambrosiae protein is 3-isopropylmalate dehydratase large subunit.